A 284-amino-acid polypeptide reads, in one-letter code: MKQKVVSIGDINVANDLPFVLFGGMNVLESRDLAMRICEHYVTVTQKLGIPYVFKASFDKANRSSIHSYRGPGLEEGMKIFQELKQTFGVKVITDVHEASQAQPVADVVDVIQLPAFLARQTDLVEAMAKTGAVINVKKPQFVSPGQMGNIVDKFHEGGNDKVILCDRGANFGYDNLVVDMLGFSVMKKVSGNSPVIFDVTHALQCRDPFGAASGGRRAQVTELARAGMAVGLAGLFIEAHPDPEHAKCDGPSALPLAKLEPFLKQIKAIDDLVKSFGELDTEH.

The protein belongs to the KdsA family.

The protein localises to the cytoplasm. The catalysed reaction is D-arabinose 5-phosphate + phosphoenolpyruvate + H2O = 3-deoxy-alpha-D-manno-2-octulosonate-8-phosphate + phosphate. Its pathway is carbohydrate biosynthesis; 3-deoxy-D-manno-octulosonate biosynthesis; 3-deoxy-D-manno-octulosonate from D-ribulose 5-phosphate: step 2/3. It participates in bacterial outer membrane biogenesis; lipopolysaccharide biosynthesis. This Citrobacter koseri (strain ATCC BAA-895 / CDC 4225-83 / SGSC4696) protein is 2-dehydro-3-deoxyphosphooctonate aldolase.